A 458-amino-acid polypeptide reads, in one-letter code: Tyrosine phenol-lyase (458 aa).

K258 carries the post-translational modification N6-(pyridoxal phosphate)lysine.

The protein belongs to the beta-eliminating lyase family. As to quaternary structure, homotetramer. Pyridoxal 5'-phosphate is required as a cofactor.

The enzyme catalyses L-tyrosine + H2O = phenol + pyruvate + NH4(+). The chain is Tyrosine phenol-lyase (tpl) from Pasteurella multocida (strain Pm70).